A 371-amino-acid chain; its full sequence is Protein-glutamate methylesterase/protein-glutamine glutaminase 3 (371 aa).

The Response regulatory domain occupies 5 to 120 (RVVVIDDSAY…SEEILTIRED (116 aa)). Residue Asp56 is modified to 4-aspartylphosphate. A CheB-type methylesterase domain is found at 174-362 (PAGRLEVVAI…LDRMSREIIQ (189 aa)). Residues Ser186, His213, and Asp309 contribute to the active site.

The protein belongs to the CheB family. Post-translationally, phosphorylated by CheA. Phosphorylation of the N-terminal regulatory domain activates the methylesterase activity.

The protein localises to the cytoplasm. The catalysed reaction is [protein]-L-glutamate 5-O-methyl ester + H2O = L-glutamyl-[protein] + methanol + H(+). It carries out the reaction L-glutaminyl-[protein] + H2O = L-glutamyl-[protein] + NH4(+). Involved in chemotaxis. Part of a chemotaxis signal transduction system that modulates chemotaxis in response to various stimuli. Catalyzes the demethylation of specific methylglutamate residues introduced into the chemoreceptors (methyl-accepting chemotaxis proteins or MCP) by CheR. Also mediates the irreversible deamidation of specific glutamine residues to glutamic acid. The polypeptide is Protein-glutamate methylesterase/protein-glutamine glutaminase 3 (Geobacter sulfurreducens (strain ATCC 51573 / DSM 12127 / PCA)).